Here is a 206-residue protein sequence, read N- to C-terminus: tRNA (guanine-N(7)-)-methyltransferase (206 aa).

S-adenosyl-L-methionine contacts are provided by Glu-37, Glu-62, Asp-89, and Asp-112. Asp-112 is a catalytic residue. The substrate site is built by Lys-116 and Asp-148.

Belongs to the class I-like SAM-binding methyltransferase superfamily. TrmB family.

The catalysed reaction is guanosine(46) in tRNA + S-adenosyl-L-methionine = N(7)-methylguanosine(46) in tRNA + S-adenosyl-L-homocysteine. Its pathway is tRNA modification; N(7)-methylguanine-tRNA biosynthesis. Its function is as follows. Catalyzes the formation of N(7)-methylguanine at position 46 (m7G46) in tRNA. The protein is tRNA (guanine-N(7)-)-methyltransferase of Myxococcus xanthus (strain DK1622).